Reading from the N-terminus, the 647-residue chain is Denticleless protein homolog (647 aa).

7 WD repeats span residues 48–88, 95–134, 137–177, 209–248, 264–303, 308–349, and 353–393; these read AAAV…KQSS, AHDN…LLGT, GHQC…KDGF, DSQQ…TAYH, TRKL…TTPV, GHSN…QAPM, and GHSQ…EGEN. 2 short sequence motifs (DDB1-binding motif) span residues 167 to 170 and 238 to 241; these read WDTR and WDLR. Disordered stretches follow at residues 410–487 and 534–647; these read QSPN…SKSP and KRSR…RTQD. 2 stretches are compositionally biased toward polar residues: residues 426 to 443 and 471 to 486; these read PSKN…SPQP and KMPS…SSKS. Residues 543–558 are compositionally biased toward basic and acidic residues; it reads LKKEDSFGLESEKRLG. A compositionally biased stretch (low complexity) spans 586-600; it reads KGSAQPKSPSSGSSQ.

Belongs to the WD repeat cdt2 family. In terms of assembly, component of the DCX(DTL) E3 ubiquitin ligase complex, at least composed of cul4 (cul4a or cul4b), ddb1, dtl/cdt2 and rbx1.

It localises to the nucleus. The protein localises to the cytoplasm. It is found in the cytoskeleton. Its subcellular location is the microtubule organizing center. The protein resides in the centrosome. It localises to the chromosome. It participates in protein modification; protein ubiquitination. Functionally, substrate-specific adapter of a DCX (DDB1-CUL4-X-box) E3 ubiquitin-protein ligase complex required for cell cycle control, DNA damage response and translesion DNA synthesis. The DCX(DTL) complex, also named CRL4(CDT2) complex, mediates the polyubiquitination and subsequent degradation of CDT1, CDKN1A/p21(CIP1), KMT5A and SDE2. CDT1 degradation in response to DNA damage is necessary to ensure proper cell cycle regulation of DNA replication. CDKN1A/p21(CIP1) degradation during S phase or following UV irradiation is essential to control replication licensing. KMT5A degradation is also important for a proper regulation of mechanisms such as TGF-beta signaling, cell cycle progression, DNA repair and cell migration. Most substrates require their interaction with PCNA for their polyubiquitination: substrates interact with PCNA via their PIP-box, and those containing the 'K+4' motif in the PIP box, recruit the DCX(DTL) complex, leading to their degradation. In undamaged proliferating cells, the DCX(DTL) complex also promotes the 'Lys-164' monoubiquitination of PCNA, thereby being involved in PCNA-dependent translesion DNA synthesis. May play a role in the regulation of the circadian clock. The protein is Denticleless protein homolog (dtl) of Danio rerio (Zebrafish).